The chain runs to 428 residues: Serine--tRNA ligase (428 aa).

231-233 contributes to the L-serine binding site; that stretch reads TAE. Residue 262–264 coordinates ATP; sequence RSE. Glu-285 is an L-serine binding site. 349–352 contributes to the ATP binding site; the sequence is EISS. Ser-385 serves as a coordination point for L-serine.

This sequence belongs to the class-II aminoacyl-tRNA synthetase family. Type-1 seryl-tRNA synthetase subfamily. Homodimer. The tRNA molecule binds across the dimer.

It localises to the cytoplasm. It carries out the reaction tRNA(Ser) + L-serine + ATP = L-seryl-tRNA(Ser) + AMP + diphosphate + H(+). The catalysed reaction is tRNA(Sec) + L-serine + ATP = L-seryl-tRNA(Sec) + AMP + diphosphate + H(+). It functions in the pathway aminoacyl-tRNA biosynthesis; selenocysteinyl-tRNA(Sec) biosynthesis; L-seryl-tRNA(Sec) from L-serine and tRNA(Sec): step 1/1. Catalyzes the attachment of serine to tRNA(Ser). Is also able to aminoacylate tRNA(Sec) with serine, to form the misacylated tRNA L-seryl-tRNA(Sec), which will be further converted into selenocysteinyl-tRNA(Sec). In Staphylococcus aureus (strain MSSA476), this protein is Serine--tRNA ligase.